A 500-amino-acid polypeptide reads, in one-letter code: Ribose import ATP-binding protein RbsA (500 aa).

2 ABC transporter domains span residues 3–239 and 246–493; these read IEMK…VGRE and DRTP…TGGV. 35-42 lines the ATP pocket; sequence GENGAGKS.

The protein belongs to the ABC transporter superfamily. Ribose importer (TC 3.A.1.2.1) family. As to quaternary structure, the complex is composed of an ATP-binding protein (RbsA), two transmembrane proteins (RbsC) and a solute-binding protein (RbsB).

Its subcellular location is the cell membrane. It carries out the reaction D-ribose(out) + ATP + H2O = D-ribose(in) + ADP + phosphate + H(+). Functionally, part of the ABC transporter complex RbsABC involved in ribose import. Responsible for energy coupling to the transport system. The chain is Ribose import ATP-binding protein RbsA from Lacticaseibacillus paracasei (strain ATCC 334 / BCRC 17002 / CCUG 31169 / CIP 107868 / KCTC 3260 / NRRL B-441) (Lactobacillus paracasei).